We begin with the raw amino-acid sequence, 171 residues long: Adenine phosphoribosyltransferase (171 aa).

The protein belongs to the purine/pyrimidine phosphoribosyltransferase family. Homodimer.

Its subcellular location is the cytoplasm. The enzyme catalyses AMP + diphosphate = 5-phospho-alpha-D-ribose 1-diphosphate + adenine. The protein operates within purine metabolism; AMP biosynthesis via salvage pathway; AMP from adenine: step 1/1. In terms of biological role, catalyzes a salvage reaction resulting in the formation of AMP, that is energically less costly than de novo synthesis. The polypeptide is Adenine phosphoribosyltransferase (Mesomycoplasma hyopneumoniae (strain 232) (Mycoplasma hyopneumoniae)).